A 313-amino-acid chain; its full sequence is Methionyl-tRNA formyltransferase (313 aa).

(6S)-5,6,7,8-tetrahydrofolate is bound at residue 112–115 (SLLP).

This sequence belongs to the Fmt family.

The catalysed reaction is L-methionyl-tRNA(fMet) + (6R)-10-formyltetrahydrofolate = N-formyl-L-methionyl-tRNA(fMet) + (6S)-5,6,7,8-tetrahydrofolate + H(+). Attaches a formyl group to the free amino group of methionyl-tRNA(fMet). The formyl group appears to play a dual role in the initiator identity of N-formylmethionyl-tRNA by promoting its recognition by IF2 and preventing the misappropriation of this tRNA by the elongation apparatus. This Geotalea uraniireducens (strain Rf4) (Geobacter uraniireducens) protein is Methionyl-tRNA formyltransferase.